Here is a 304-residue protein sequence, read N- to C-terminus: Aspartate carbamoyltransferase catalytic subunit (304 aa).

Positions 49 and 50 each coordinate carbamoyl phosphate. K77 contacts L-aspartate. Residues R99, H127, and Q130 each contribute to the carbamoyl phosphate site. Residues R160 and R211 each coordinate L-aspartate. Residues A252 and P253 each contribute to the carbamoyl phosphate site.

This sequence belongs to the aspartate/ornithine carbamoyltransferase superfamily. ATCase family. In terms of assembly, heterododecamer (2C3:3R2) of six catalytic PyrB chains organized as two trimers (C3), and six regulatory PyrI chains organized as three dimers (R2).

It carries out the reaction carbamoyl phosphate + L-aspartate = N-carbamoyl-L-aspartate + phosphate + H(+). The protein operates within pyrimidine metabolism; UMP biosynthesis via de novo pathway; (S)-dihydroorotate from bicarbonate: step 2/3. Catalyzes the condensation of carbamoyl phosphate and aspartate to form carbamoyl aspartate and inorganic phosphate, the committed step in the de novo pyrimidine nucleotide biosynthesis pathway. This is Aspartate carbamoyltransferase catalytic subunit from Bacillus cereus (strain ATCC 10987 / NRS 248).